The sequence spans 138 residues: uncharacterized protein (138 aa).

This is an uncharacterized protein from Acanthamoeba polyphaga (Amoeba).